Consider the following 161-residue polypeptide: Nucleotide-binding protein Shal_3198 (161 aa).

Belongs to the YajQ family.

Functionally, nucleotide-binding protein. The polypeptide is Nucleotide-binding protein Shal_3198 (Shewanella halifaxensis (strain HAW-EB4)).